The following is a 337-amino-acid chain: Deoxyhypusine hydroxylase (337 aa).

2 HEAT-like PBS-type repeats span residues 73-99 and 106-132; these read LKHE…VLSD and CRHE…YRDR. His-75, Glu-76, His-108, and Glu-109 together coordinate Fe cation. Residues 156–165 show a composition bias toward basic and acidic residues; that stretch reads AERQKEKLRP. Residues 156–183 are disordered; the sequence is AERQKEKLRPSDFASIDPAPPMPESDKE. 3 HEAT-like PBS-type repeats span residues 202 to 235, 240 to 266, and 273 to 300; these read SRYR…GLSD, FRHE…ALSN, and VRHE…FLHD. 4 residues coordinate Fe cation: His-242, Glu-243, His-275, and Glu-276.

This sequence belongs to the deoxyhypusine hydroxylase family. Fe(2+) serves as cofactor.

Its subcellular location is the cytoplasm. The protein localises to the nucleus. It catalyses the reaction [eIF5A protein]-deoxyhypusine + AH2 + O2 = [eIF5A protein]-hypusine + A + H2O. It participates in protein modification; eIF5A hypusination. Catalyzes the hydroxylation of the N(6)-(4-aminobutyl)-L-lysine intermediate to form hypusine, an essential post-translational modification only found in mature eIF-5A factor. This Gibberella zeae (strain ATCC MYA-4620 / CBS 123657 / FGSC 9075 / NRRL 31084 / PH-1) (Wheat head blight fungus) protein is Deoxyhypusine hydroxylase.